The primary structure comprises 84 residues: Large ribosomal subunit protein bL27 (84 aa).

Residues 1–25 form a disordered region; that stretch reads MAHKKGAGSTKNGRDSKPKMLGVKR.

Belongs to the bacterial ribosomal protein bL27 family.

The polypeptide is Large ribosomal subunit protein bL27 (Dehalococcoides mccartyi (strain ATCC BAA-2266 / KCTC 15142 / 195) (Dehalococcoides ethenogenes (strain 195))).